We begin with the raw amino-acid sequence, 580 residues long: Serine/threonine-protein kinase PINK1, mitochondrial (580 aa).

The N-terminal 77 residues, 1–77 (MAVRQALGRG…RFFRQSVAGL (77 aa)), are a transit peptide targeting the mitochondrion. Residues 78–93 (AARIQRQFMVRARGGA) are Mitochondrial intermembrane-facing. The chain crosses the membrane as a helical span at residues 94 to 110 (GPCGRAVFLAFGLGLGL). Residues 111–117 (IEEKQAE) are required for outer membrane localization. Over 111–580 (IEEKQAEGRR…LLLSSWRAAP (470 aa)) the chain is Cytoplasmic. Positions 156–510 (YLIGQAIGKG…LAANVLHLSL (355 aa)) constitute a Protein kinase domain. Residues 162-170 (IGKGCNAAV) and Lys-186 contribute to the ATP site. The residue at position 227 (Ser-227) is a Phosphoserine; by autocatalysis. Residue Asp-361 is the Proton acceptor of the active site. Ser-401 carries the post-translational modification Phosphoserine; by autocatalysis.

This sequence belongs to the protein kinase superfamily. Ser/Thr protein kinase family. As to quaternary structure, upon mitochondrial depolarization, it forms a supercomplex with TOM and TIM23 complexes. PINK1-TOM-TIM23 supercomplex formation requires PINK1 interaction with TOMM20 and TOMM70 and is critical for PINK1 stabilization at the outer mitochondrial membrane, kinase activation and downstream mitophagy. Upon mitochondrial depolarization, interacts with TIMM23; the interaction is required for PINK1 accumulation at the outer mitochondrial membrane, kinase activation by autophosphorylation and PRKN recruitement to mitochondria. Interacts with PRKN. Interacts with FBXO7. Forms a complex with PRKN and PARK7. Interacts with NENF. Requires Mg(2+) as cofactor. Proteolytically cleaved. In healthy cells, the precursor is continuously imported into the inner mitochondrial membrane (IMM), where it is proteolytically cleaved by mitochondrial-processing peptidase (MPP) and then undergoes further proteolytic cleavage by PARL or AFG3L2 to give rise to the 52 kDa short form. The 52 kDa short form is then released into the cytosol where it rapidly undergoes proteasome-dependent degradation. In unhealthy cells, when cellular stress conditions lead to the loss of mitochondrial membrane potential, mitochondrial import is impaired leading to the precursor accumulating on the outer mitochondrial membrane (OMM). If accumulation at the OMM fails and it is imported into the depolarized mitochondria, it undergoes cleavage by the IMM protease OMA1, promoting its subsequent degradation by the proteasome. In terms of processing, autophosphorylated. Loss of mitochondrial membrane potential results in the precursor accumulating on the outer mitochondrial membrane (OMM) where it is activated by autophosphorylation. Autophosphorylation at Ser-227 and Ser-401 is essential for selective recruitment of PRKN to depolarized mitochondria, via PINK1-dependent phosphorylation of ubiquitin and PRKN. In terms of tissue distribution, high levels expressed in testis, lower levels in brain, heart, lung, liver and kidney.

The protein localises to the mitochondrion outer membrane. It is found in the mitochondrion inner membrane. The protein resides in the cytoplasm. It localises to the cytosol. It catalyses the reaction L-seryl-[protein] + ATP = O-phospho-L-seryl-[protein] + ADP + H(+). It carries out the reaction L-threonyl-[protein] + ATP = O-phospho-L-threonyl-[protein] + ADP + H(+). In terms of biological role, serine/threonine-protein kinase which acts as a sensor of mitochondrial damage and protects against mitochondrial dysfunction during cellular stress. It phosphorylates mitochondrial proteins to coordinate mitochondrial quality control mechanisms that remove and replace dysfunctional mitochondrial components. Depending on the severity of mitochondrial damage, activity ranges from preventing apoptosis and stimulating mitochondrial biogenesis to eliminating severely damaged mitochondria via PINK1-PRKN-dependent mitophagy. When cellular stress results in irreversible mitochondrial damage, PINK1 accumulates at the outer mitochondrial membrane (OMM) where it phosphorylates pre-existing polyubiquitin chains at 'Ser-65', recruits PRKN from the cytosol to the OMM and activates PRKN by phosphorylation at 'Ser-65'. Activated PRKN then ubiquinates VDAC1 and other OMM proteins to initiate mitophagy. The PINK1-PRKN pathway also promotes fission of damaged mitochondria by phosphorylating and thus promoting the PRKN-dependent degradation of mitochondrial proteins involved in fission such as MFN2. This prevents the refusion of unhealthy mitochondria with the mitochondrial network or initiates mitochondrial fragmentation facilitating their later engulfment by autophagosomes. Also promotes mitochondrial fission independently of PRKN and ATG7-mediated mitophagy, via the phosphorylation and activation of DNM1L. Regulates motility of damaged mitochondria by promoting the ubiquitination and subsequent degradation of MIRO1 and MIRO2; in motor neurons, this likely inhibits mitochondrial intracellular anterograde transport along the axons which probably increases the chance of the mitochondria undergoing mitophagy in the soma. Required for ubiquinone reduction by mitochondrial complex I by mediating phosphorylation of complex I subunit NDUFA10. Phosphorylates LETM1, positively regulating its mitochondrial calcium transport activity. The sequence is that of Serine/threonine-protein kinase PINK1, mitochondrial (Pink1) from Mus musculus (Mouse).